The sequence spans 106 residues: ATP-dependent Clp protease adapter protein ClpS (106 aa).

The segment at 1 to 22 (MTDEPNQDDPQGPEVEAAKPSL) is disordered.

Belongs to the ClpS family. As to quaternary structure, binds to the N-terminal domain of the chaperone ClpA.

In terms of biological role, involved in the modulation of the specificity of the ClpAP-mediated ATP-dependent protein degradation. The polypeptide is ATP-dependent Clp protease adapter protein ClpS (Halorhodospira halophila (strain DSM 244 / SL1) (Ectothiorhodospira halophila (strain DSM 244 / SL1))).